Reading from the N-terminus, the 457-residue chain is Histidine--tRNA ligase (457 aa).

It belongs to the class-II aminoacyl-tRNA synthetase family. In terms of assembly, homodimer.

It is found in the cytoplasm. It carries out the reaction tRNA(His) + L-histidine + ATP = L-histidyl-tRNA(His) + AMP + diphosphate + H(+). In Mesoplasma florum (strain ATCC 33453 / NBRC 100688 / NCTC 11704 / L1) (Acholeplasma florum), this protein is Histidine--tRNA ligase.